The chain runs to 197 residues: Imidazoleglycerol-phosphate dehydratase (197 aa).

This sequence belongs to the imidazoleglycerol-phosphate dehydratase family.

The protein resides in the cytoplasm. The enzyme catalyses D-erythro-1-(imidazol-4-yl)glycerol 3-phosphate = 3-(imidazol-4-yl)-2-oxopropyl phosphate + H2O. It functions in the pathway amino-acid biosynthesis; L-histidine biosynthesis; L-histidine from 5-phospho-alpha-D-ribose 1-diphosphate: step 6/9. This is Imidazoleglycerol-phosphate dehydratase from Bradyrhizobium sp. (strain ORS 278).